Here is a 305-residue protein sequence, read N- to C-terminus: Tyrosine recombinase XerD (305 aa).

The Core-binding (CB) domain maps to 1 to 83 (MEFISQFLEM…TIKSYYEFLI (83 aa)). Positions 104-298 (KLPEILSIDD…QTNHLKKALL (195 aa)) constitute a Tyr recombinase domain. Active-site residues include R145, K175, H250, R253, and H276. Y285 acts as the O-(3'-phospho-DNA)-tyrosine intermediate in catalysis.

It belongs to the 'phage' integrase family. XerD subfamily. In terms of assembly, forms a cyclic heterotetrameric complex composed of two molecules of XerC and two molecules of XerD.

Its subcellular location is the cytoplasm. Site-specific tyrosine recombinase, which acts by catalyzing the cutting and rejoining of the recombining DNA molecules. The XerC-XerD complex is essential to convert dimers of the bacterial chromosome into monomers to permit their segregation at cell division. It also contributes to the segregational stability of plasmids. This chain is Tyrosine recombinase XerD, found in Rickettsia bellii (strain RML369-C).